The sequence spans 119 residues: Spermidine export protein MdtJ (119 aa).

Transmembrane regions (helical) follow at residues 1–21, 31–51, 54–74, and 81–101; these read MIYWILLALAIVSEITGTLAL, AGFILMLVMISLSYILLSFSV, IALGVAYALWEGVGIVLITLF, and ETLTVQKALGLLVLIAGILLI.

The protein belongs to the drug/metabolite transporter (DMT) superfamily. Small multidrug resistance (SMR) (TC 2.A.7.1) family. MdtJ subfamily. Forms a complex with MdtI.

Its subcellular location is the cell inner membrane. Functionally, catalyzes the excretion of spermidine. This Cronobacter sakazakii (strain ATCC BAA-894) (Enterobacter sakazakii) protein is Spermidine export protein MdtJ (mdtJ).